Reading from the N-terminus, the 188-residue chain is Acireductone dioxygenase (188 aa).

The Fe(2+) site is built by His97, His99, Glu103, and His141. Residues His97, His99, Glu103, and His141 each coordinate Ni(2+).

This sequence belongs to the acireductone dioxygenase (ARD) family. Monomer. It depends on Fe(2+) as a cofactor. Requires Ni(2+) as cofactor.

It catalyses the reaction 1,2-dihydroxy-5-(methylsulfanyl)pent-1-en-3-one + O2 = 3-(methylsulfanyl)propanoate + CO + formate + 2 H(+). The enzyme catalyses 1,2-dihydroxy-5-(methylsulfanyl)pent-1-en-3-one + O2 = 4-methylsulfanyl-2-oxobutanoate + formate + 2 H(+). It functions in the pathway amino-acid biosynthesis; L-methionine biosynthesis via salvage pathway; L-methionine from S-methyl-5-thio-alpha-D-ribose 1-phosphate: step 5/6. Its function is as follows. Catalyzes 2 different reactions between oxygen and the acireductone 1,2-dihydroxy-3-keto-5-methylthiopentene (DHK-MTPene) depending upon the metal bound in the active site. Fe-containing acireductone dioxygenase (Fe-ARD) produces formate and 2-keto-4-methylthiobutyrate (KMTB), the alpha-ketoacid precursor of methionine in the methionine recycle pathway. Ni-containing acireductone dioxygenase (Ni-ARD) produces methylthiopropionate, carbon monoxide and formate, and does not lie on the methionine recycle pathway. The sequence is that of Acireductone dioxygenase from Xylella fastidiosa (strain 9a5c).